The following is an 822-amino-acid chain: Coiled-coil domain-containing protein 175 (822 aa).

Coiled coils occupy residues 129–164 (IIEI…EVLG), 223–397 (IEKQ…KQMM), and 510–537 (HLIE…IEEL).

The protein is Coiled-coil domain-containing protein 175 (Ccdc175) of Mus musculus (Mouse).